Consider the following 182-residue polypeptide: Dirigent protein 1 (182 aa).

Positions methionine 1–alanine 24 are cleaved as a signal peptide. Asparagine 125 is a glycosylation site (N-linked (GlcNAc...) asparagine).

Belongs to the plant dirigent protein family. In terms of assembly, homodimer.

Its subcellular location is the secreted. The protein localises to the extracellular space. It is found in the apoplast. In terms of biological role, dirigent proteins impart stereoselectivity on the phenoxy radical-coupling reaction, yielding optically active lignans from two molecules of coniferyl alcohol in the biosynthesis of lignans, flavonolignans, and alkaloids and thus plays a central role in plant secondary metabolism. This is Dirigent protein 1 (DIR1) from Arabidopsis thaliana (Mouse-ear cress).